The following is a 266-amino-acid chain: Oxidoreductase aflX (266 aa).

Belongs to the avfA family.

Its pathway is mycotoxin biosynthesis; aflatoxin biosynthesis. Functionally, oxidoreductase; part of the gene cluster that mediates the biosynthesis of aflatoxins, a group of polyketide-derived furanocoumarins, and part of the most toxic and carcinogenic compounds among the known mycotoxins. The four major aflatoxins produced by A.parasiticus are aflatoxin B1 (AFB1), aflatoxin B2 (AFB2), aflatoxin G1 (AFG1) and aflatoxin G2 (AFG2). Within the aflatoxin pathway, the oxidoreductase aflX seems to be involved in the conversion of versicolorin A (VERA) to demethylsterigmatocystin (DMST), through probable epoxide ring-opening step following versicolorin A oxidation required for the formation of the xanthone ring. The biosynthesis of aflatoxins begins with the norsolorinic acid synthase aflC that combines a hexanoyl starter unit produced by the fatty acid synthase aflA/aflB and 7 malonyl-CoA extender units to synthesize the precursor NOR. The second step is the conversion of NOR to averantin and requires the norsolorinic acid ketoreductase aflD, which catalyzes the dehydration of norsolorinic acid to form (1'S)-averantin. The norsolorinic acid reductases aflE and aflF may also play a role in the conversion of NOR to AVN. The cytochrome P450 monooxygenase aflG then catalyzes the hydroxylation of AVN to 5'hydroxyaverantin (HAVN). The next step is performed by the 5'-hydroxyaverantin dehydrogenase aflH that transforms HAVN to 5'-oxoaverantin (OAVN) which is further converted to averufin (AVF) by aflK that plays a dual role in the pathway, as a 5'-oxoaverantin cyclase that mediates conversion of 5'-oxoaverantin, as well as a versicolorin B synthase in a later step in the pathway. The averufin oxidase aflI catalyzes the conversion of AVF to versiconal hemiacetal acetate (VHA). VHA is then the substrate for the versiconal hemiacetal acetate esterase aflJ to yield versiconal (VAL). Versicolorin B synthase aflK then converts VAL to versicolorin B (VERB) by closing the bisfuran ring of aflatoxin which is required for DNA-binding, thus giving to aflatoxin its activity as a mutagen. Then, the activity of the versicolorin B desaturase aflL leads to versicolorin A (VERA). A branch point starts from VERB since it can also be converted to dihydrodemethylsterigmatocystin (DMDHST), probably also by aflL, VERA being a precursor for aflatoxins B1 and G1, and DMDHST for aflatoxins B2 and G2. Next, the versicolorin reductase aflM and the cytochrome P450 monooxygenase aflN are involved in conversion of VERA to demethylsterigmatocystin (DMST). AflX and aflY seem also involved in this step, through probable aflX-mediated epoxide ring-opening step following versicolorin A oxidation and aflY-mediated Baeyer-Villiger oxidation required for the formation of the xanthone ring. The methyltransferase aflO then leads to the modification of DMST to sterigmatocystin (ST), and of DMDHST to dihydrosterigmatocystin (DHST). Both ST and DHST are then substrates of the O-methyltransferase aflP to yield O-methylsterigmatocystin (OMST) and dihydro-O-methylsterigmatocystin (DHOMST), respectively. Finally OMST is converted to aflatoxins B1 and G1, and DHOMST to aflatoxins B2 and G2, via the action of several enzymes including O-methylsterigmatocystin oxidoreductase aflQ, the cytochrome P450 monooxygenase aflU, but also the NADH-dependent flavin oxidoreductase nadA which is specifically required for the synthesis of AFG1. This is Oxidoreductase aflX from Aspergillus parasiticus (strain ATCC 56775 / NRRL 5862 / SRRC 143 / SU-1).